We begin with the raw amino-acid sequence, 110 residues long: UPF0060 membrane protein Noc_2955 (110 aa).

A run of 4 helical transmembrane segments spans residues 7-27 (VGLFLITALAEIAGCYLAYLW), 33-53 (TIWLLVPCALSLVAFVWLLSL), 63-83 (AAYGGVYIVMAILWLWVVNGI), and 87-107 (TWDLVGSAIALLGMAIIMFAP).

Belongs to the UPF0060 family.

The protein localises to the cell inner membrane. The sequence is that of UPF0060 membrane protein Noc_2955 from Nitrosococcus oceani (strain ATCC 19707 / BCRC 17464 / JCM 30415 / NCIMB 11848 / C-107).